Reading from the N-terminus, the 98-residue chain is MALTKAELAENLFDKLGFSKRDAKETVEVFFEEIRKALESGEQVKLSGFGNFDLRDKNERPGRNPKTGEDIPITARRVVTFRPGQKLKARVENLKADQ.

The segment at 51–71 (NFDLRDKNERPGRNPKTGEDI) is disordered. Residues 53-69 (DLRDKNERPGRNPKTGE) are compositionally biased toward basic and acidic residues.

Belongs to the bacterial histone-like protein family. In terms of assembly, heterodimer of an alpha and a beta chain.

Functionally, this protein is one of the two subunits of integration host factor, a specific DNA-binding protein that functions in genetic recombination as well as in transcriptional and translational control. The chain is Integration host factor subunit alpha from Vibrio campbellii (strain ATCC BAA-1116).